A 351-amino-acid polypeptide reads, in one-letter code: D-alanine--D-alanine ligase (351 aa).

Residues 135–343 (NQIFLQSGQK…MEEVFSDLIE (209 aa)) form the ATP-grasp domain. Position 167 to 222 (167 to 222 (LETLGFPQFLKPVEGGSSVSVYKITNREQLKEKLALIFESDSKVMSQSFLTGIEVS)) interacts with ATP. Mg(2+) contacts are provided by Asp298, Glu310, and Asn312.

It belongs to the D-alanine--D-alanine ligase family. Mg(2+) is required as a cofactor. It depends on Mn(2+) as a cofactor.

The protein resides in the cytoplasm. It catalyses the reaction 2 D-alanine + ATP = D-alanyl-D-alanine + ADP + phosphate + H(+). It participates in cell wall biogenesis; peptidoglycan biosynthesis. Functionally, cell wall formation. This Leptospira interrogans serogroup Icterohaemorrhagiae serovar copenhageni (strain Fiocruz L1-130) protein is D-alanine--D-alanine ligase.